Consider the following 1527-residue polypeptide: Rho guanine nucleotide exchange factor 11 (1527 aa).

The interval 1–56 (MSIRLPHSIDRSASKKQSHLSSPIASWLSSLSSLGDSTPERTSPSHHRQPSDTSET) is disordered. A phosphoserine mark is found at S2, S30, S32, and S51. Positions 19-37 (HLSSPIASWLSSLSSLGDS) are enriched in low complexity. Positions 64–143 (CVIIQKDQHG…LTLLGSSPPS (80 aa)) constitute a PDZ domain. The tract at residues 216–247 (PCGETSQRTCEGRLSVDSQEADSGLDSGTERF) is disordered. A phosphoserine mark is found at S262 and S268. A Phosphothreonine modification is found at T271. Phosphoserine is present on residues S272 and S288. An RGSL domain is found at 323–503 (ESDIIFQDLE…NTFMSHAGIR (181 aa)). The stretch at 461–487 (LRERQMAEKQLAALGDILSKYEEDRSA) forms a coiled coil. Disordered stretches follow at residues 506 to 569 (ESRS…QSIK) and 582 to 687 (NSHQ…GRRS). Positions 509-519 (SSCTAEKTQSA) are enriched in polar residues. Basic and acidic residues-rich tracts occupy residues 539-551 (SKKE…DKKR) and 624-645 (KGRE…RSDV). 2 positions are modified to phosphoserine: S643 and S671. Residues 656–672 (LHQSASSSASSLSTRSL) are compositionally biased toward low complexity. A phosphothreonine mark is found at T676 and T680. In terms of domain architecture, DH spans 742 to 931 (DRQEVINELF…REILKFVNEA (190 aa)). In terms of domain architecture, PH spans 973 to 1087 (KMIHEGPLTW…WMELLEEAVQ (115 aa)). Disordered regions lie at residues 1090–1184 (TKHP…NRGI), 1231–1321 (QAAG…TEPA), and 1379–1411 (AGPL…PQPY). Residues 1126 to 1138 (EVYHTEKEPKKLP) are compositionally biased toward basic and acidic residues. Residues 1242 to 1251 (PTPSVVSITS) are compositionally biased toward polar residues. 2 positions are modified to phosphoserine: S1299 and S1304. Low complexity predominate over residues 1312 to 1321 (AAEAASTEPA). 2 positions are modified to phosphoserine: S1462 and S1463. A phosphothreonine mark is found at T1467 and T1480. The disordered stretch occupies residues 1480 to 1527 (TDYSLSPPAKEALASDSQNGQEQGSCPEEGSDIALEDSATDTAVSPGP). A Phosphoserine modification is found at S1485. The segment covering 1494–1503 (SDSQNGQEQG) has biased composition (polar residues). Residues 1508–1518 (EGSDIALEDSA) show a composition bias toward acidic residues.

Interacts with RHOA, GNA13 and SLC1A6. Interacts with GNA12, PLXNB1 and PLXNB2. Interacts (via DH domain) with GCSAM (via C-terminus). Found in a complex with ARHGEF11 and ARHGEF12; binding to ARHGEF11 and ARHGEF12 enhances CDC42 GEF activity of PLEKHG4B, and PLEKHG4B, in turn, inhibits ARHGEF11- and ARHGEF12-mediated RHOA activation. Phosphorylated by MAP kinase p38 (MAPK11, MAPK12, MAPK13 and/or MAPK14). Post-translationally, ubiquitinated by the BCR(KLHL20) E3 ubiquitin ligase complex when previously phosphorylated by MAP kinase p38 (MAPK11, MAPK12, MAPK13 and/or MAPK14), leading to its degradation, thereby restricting RhoA activity and facilitating growth cone spreading and neurite outgrowth.

The protein localises to the cytoplasm. Its subcellular location is the membrane. Functionally, may play a role in the regulation of RhoA GTPase by guanine nucleotide-binding alpha-12 (GNA12) and alpha-13 (GNA13). Acts as guanine nucleotide exchange factor (GEF) for RhoA GTPase and may act as GTPase-activating protein (GAP) for GNA12 and GNA13. Involved in neurotrophin-induced neurite outgrowth. The polypeptide is Rho guanine nucleotide exchange factor 11 (Arhgef11) (Rattus norvegicus (Rat)).